The following is a 647-amino-acid chain: Methyl-accepting chemotaxis protein McpK (647 aa).

At 1–16 (MYDWWVLQLAKLSVSR) the chain is on the cytoplasmic side. A helical membrane pass occupies residues 17 to 37 (KLMVGFGVLLALLLLVVISSN). The Periplasmic segment spans residues 38-291 (RTLTHQTALS…LRESTASRDR (254 aa)). An HBM domain is found at 45-287 (ALSEQLAEVA…AGRQLRESTA (243 aa)). A helical transmembrane segment spans residues 292–312 (ASLWLIAALALAFGCVAGWAI). Over 313-647 (NRQIVRPLDE…LQAQVGRFRL (335 aa)) the chain is Cytoplasmic. In terms of domain architecture, HAMP spans 314 to 370 (RQIVRPLDEALAQAEAIAAGDLGKRPQNPLTLQRRDELGQLQRVMQRMGDSLRELVG). Residues 375-611 (GVSQLASSAE…EINRSVLSVR (237 aa)) form the Methyl-accepting transducer domain.

It belongs to the methyl-accepting chemotaxis (MCP) protein family. In terms of assembly, ligand free ligand-binding domain (LBD) is present in a monomer-dimer equilibrium. AlphaKG binding stabilizes the homodimer.

The protein localises to the cell inner membrane. In terms of biological role, chemotactic-signal transducers respond to changes in the concentration of attractants and repellents in the environment, transduce a signal from the outside to the inside of the cell, and facilitate sensory adaptation through the variation of the level of methylation. McpK is a chemoreceptor that specifically binds and mediates chemotaxis to alpha-ketoglutarate (alphaKG). In Pseudomonas aeruginosa (strain ATCC 15692 / DSM 22644 / CIP 104116 / JCM 14847 / LMG 12228 / 1C / PRS 101 / PAO1), this protein is Methyl-accepting chemotaxis protein McpK.